Here is a 96-residue protein sequence, read N- to C-terminus: MEPYLLRDEELKELVVKIPGWEIKSEQIQREFSFANFIEAFSFMTKVALICEKYNHHPNWENIYSKVIISLNTHDLGGITNLDQTLASEINKIFDQ.

Belongs to the pterin-4-alpha-carbinolamine dehydratase family.

It catalyses the reaction (4aS,6R)-4a-hydroxy-L-erythro-5,6,7,8-tetrahydrobiopterin = (6R)-L-erythro-6,7-dihydrobiopterin + H2O. The polypeptide is Putative pterin-4-alpha-carbinolamine dehydratase (Prochlorococcus marinus (strain MIT 9312)).